Consider the following 232-residue polypeptide: Transcriptional regulatory protein CpxR (232 aa).

The Response regulatory domain maps to 3 to 115; it reads KILLVDDDRE…ELVARIRAIL (113 aa). Asp-51 carries the post-translational modification 4-aspartylphosphate. Positions 131–230 form a DNA-binding region, ompR/PhoB-type; that stretch reads SPTLEVDALS…LRGRGYLMVS (100 aa).

Interacts with cognate sensor kinase CpxA. Post-translationally, phosphorylated by CpxA.

Its subcellular location is the cytoplasm. The two-component system is activated by envelope stress such as overexpression of some (misfolded) periplasmic proteins. In terms of biological role, response regulator member of the two-component regulatory system CpxA/CpxR which responds to envelope stress response by activating or, in some cases, repressing expression of downstream genes. Binds to the promoter regions of various genes in vitro, including ompC, cpxP, ryhB and mrkA and, when CpxR is phosphorylated, pecO. Represses expression of the major pilin of type 3 fimbriae MrkA as well as that of type 1 fimbriae FimA. Repression of expression of MrkA appears to be indirect, mediated by activation of the iron homeostasis regulator RyhB. The polypeptide is Transcriptional regulatory protein CpxR (Klebsiella pneumoniae subsp. pneumoniae (strain HS11286)).